We begin with the raw amino-acid sequence, 156 residues long: Succinate dehydrogenase assembly factor 2-B, mitochondrial (156 aa).

The transit peptide at 1-24 (MLRQFIISRVGRRLQLPMITQSRL) directs the protein to the mitochondrion.

It belongs to the SDHAF2 family. Interacts with the flavoprotein subunit within the SDH catalytic dimer.

The protein resides in the mitochondrion matrix. Its function is as follows. Plays an essential role in the assembly of succinate dehydrogenase (SDH), an enzyme complex (also referred to as respiratory complex II) that is a component of both the tricarboxylic acid (TCA) cycle and the mitochondrial electron transport chain, and which couples the oxidation of succinate to fumarate with the reduction of ubiquinone (coenzyme Q) to ubiquinol. Required for flavinylation (covalent attachment of FAD) of the flavoprotein subunit of the SDH catalytic dimer. The chain is Succinate dehydrogenase assembly factor 2-B, mitochondrial from Drosophila sechellia (Fruit fly).